Here is a 238-residue protein sequence, read N- to C-terminus: Ribitol-5-phosphate cytidylyltransferase 2 (238 aa).

Residues 7–10 and 81–87 contribute to the CTP site; these read LAGG and GTDRNET.

This sequence belongs to the IspD/TarI cytidylyltransferase family. TarI subfamily.

It catalyses the reaction D-ribitol 5-phosphate + CTP + H(+) = CDP-L-ribitol + diphosphate. It functions in the pathway cell wall biogenesis; poly(ribitol phosphate) teichoic acid biosynthesis. Functionally, catalyzes the transfer of the cytidylyl group of CTP to D-ribitol 5-phosphate. The sequence is that of Ribitol-5-phosphate cytidylyltransferase 2 from Staphylococcus aureus (strain MRSA252).